The sequence spans 1323 residues: Phosphoribosylformylglycinamidine synthase (1323 aa).

ATP-binding positions include 312 to 323 (GAATGSGGEIRD), 391 to 393 (NGY), and Ala-691. Mg(2+) is bound by residues Asp-692, Glu-733, Asn-737, and Asp-903. Ser-905 serves as a coordination point for ATP. Positions 1062–1306 (VAILREQGVN…YPHSKASEWG (245 aa)) constitute a Glutamine amidotransferase type-1 domain. The Nucleophile role is filled by Cys-1156. Catalysis depends on residues His-1284 and Glu-1286.

It in the N-terminal section; belongs to the FGAMS family.

The protein resides in the cytoplasm. The enzyme catalyses N(2)-formyl-N(1)-(5-phospho-beta-D-ribosyl)glycinamide + L-glutamine + ATP + H2O = 2-formamido-N(1)-(5-O-phospho-beta-D-ribosyl)acetamidine + L-glutamate + ADP + phosphate + H(+). It participates in purine metabolism; IMP biosynthesis via de novo pathway; 5-amino-1-(5-phospho-D-ribosyl)imidazole from N(2)-formyl-N(1)-(5-phospho-D-ribosyl)glycinamide: step 1/2. Phosphoribosylformylglycinamidine synthase involved in the purines biosynthetic pathway. Catalyzes the ATP-dependent conversion of formylglycinamide ribonucleotide (FGAR) and glutamine to yield formylglycinamidine ribonucleotide (FGAM) and glutamate. The protein is Phosphoribosylformylglycinamidine synthase (ade3) of Schizosaccharomyces pombe (strain 972 / ATCC 24843) (Fission yeast).